A 2374-amino-acid polypeptide reads, in one-letter code: CCR4-NOT transcription complex subunit 1 (2374 aa).

Short sequence motifs (LXXLL) lie at residues 153–157, 181–185, 223–227, and 570–574; these read LPDLL, LHLLL, LAPLL, and LSMLL. The segment covering 1009–1051 has biased composition (low complexity); it reads LAQAQAQSQPPKAPQPGQASTLVTTATTTTTAAKTTTITRPTA. The disordered stretch occupies residues 1009–1060; it reads LAQAQAQSQPPKAPQPGQASTLVTTATTTTTAAKTTTITRPTAVGPKKDVPP. The tract at residues 1082 to 1604 is interaction with CCR4-NOT complex catalytic subunits; it reads EPPENVQEKI…QPMKQQAWPT (523 aa). 3 short sequence motifs (LXXLL) span residues 1638 to 1642, 1940 to 1944, and 2094 to 2098; these read IRSLL, LIALL, and LRVLL.

The protein belongs to the CNOT1 family. As to quaternary structure, component of the CCR4-NOT complex.

It is found in the cytoplasm. Its subcellular location is the nucleus. In terms of biological role, scaffolding component of the CCR4-NOT complex which is one of the major cellular mRNA deadenylases and is linked to various cellular processes including bulk mRNA degradation, miRNA-mediated repression, translational repression during translational initiation and general transcription regulation. Additional complex functions may be a consequence of its influence on mRNA expression. Its scaffolding function implies its interaction with the catalytic complex module and diverse RNA-binding proteins mediating the complex recruitment to selected mRNA 3'UTRs. Acts as a transcriptional repressor. Represses the ligand-dependent transcriptional activation by nuclear receptors. This Danio rerio (Zebrafish) protein is CCR4-NOT transcription complex subunit 1 (cnot1).